We begin with the raw amino-acid sequence, 415 residues long: Citrate (Re)-synthase (415 aa).

The Pyruvate carboxyltransferase domain occupies 4 to 275; it reads IFIIDVTNRD…GHEVDLSKAW (272 aa).

It belongs to the alpha-IPM synthase/homocitrate synthase family. Mn(2+) serves as cofactor.

It carries out the reaction oxaloacetate + acetyl-CoA + H2O = citrate + CoA + H(+). With respect to regulation, inhibited by citrate and under aerobic conditions. Its function is as follows. Catalyzes the condensation of the acetyl group of acetyl coenzyme A (acetyl-CoA) with oxaloacetate to form citrate. This enzyme is highly Re-face stereospecific with respect to the C-2 of oxaloacetate. This is Citrate (Re)-synthase from Dehalococcoides mccartyi (strain CBDB1).